The following is a 336-amino-acid chain: Inositol 2-dehydrogenase (336 aa).

The protein belongs to the Gfo/Idh/MocA family. As to quaternary structure, homotetramer.

The enzyme catalyses myo-inositol + NAD(+) = scyllo-inosose + NADH + H(+). Its function is as follows. Involved in the oxidation of myo-inositol (MI) to 2-keto-myo-inositol (2KMI or 2-inosose). This chain is Inositol 2-dehydrogenase, found in Pseudomonas fluorescens (strain ATCC BAA-477 / NRRL B-23932 / Pf-5).